The primary structure comprises 361 residues: Uroporphyrinogen decarboxylase (361 aa).

Residues 27-31 (RQAGR), Asp77, Tyr154, Thr209, and His327 each bind substrate.

Belongs to the uroporphyrinogen decarboxylase family. As to quaternary structure, homodimer.

It localises to the cytoplasm. The enzyme catalyses uroporphyrinogen III + 4 H(+) = coproporphyrinogen III + 4 CO2. The protein operates within porphyrin-containing compound metabolism; protoporphyrin-IX biosynthesis; coproporphyrinogen-III from 5-aminolevulinate: step 4/4. In terms of biological role, catalyzes the decarboxylation of four acetate groups of uroporphyrinogen-III to yield coproporphyrinogen-III. This is Uroporphyrinogen decarboxylase from Coxiella burnetii (strain RSA 331 / Henzerling II).